Consider the following 286-residue polypeptide: CDP-diacylglycerol--serine O-phosphatidyltransferase (286 aa).

Transmembrane regions (helical) follow at residues 15–35 (ILPS…IKFA), 74–94 (IDSL…LYVS), 95–115 (MLSK…CVVL), 135–155 (EFFV…LLAL), 167–187 (GWFL…GIPM), and 207–227 (LAIC…VIII).

It belongs to the CDP-alcohol phosphatidyltransferase class-I family.

The protein localises to the cell membrane. The catalysed reaction is a CDP-1,2-diacyl-sn-glycerol + L-serine = a 1,2-diacyl-sn-glycero-3-phospho-L-serine + CMP + H(+). This is CDP-diacylglycerol--serine O-phosphatidyltransferase (pssA) from Mycobacterium tuberculosis (strain ATCC 25618 / H37Rv).